The following is a 596-amino-acid chain: Ferredoxin--nitrite reductase, chloroplastic (596 aa).

The transit peptide at 1–28 (MASSASLQRFLPPYPHAAASRCRPPGVR) directs the protein to the chloroplast. Residues 1–56 (MASSASLQRFLPPYPHAAASRCRPPGVRARPVQSSTVSAPSSSTPAADEAVSAERL) are disordered. The span at 31 to 47 (PVQSSTVSAPSSSTPAA) shows a compositional bias: low complexity. The [4Fe-4S] cluster site is built by C474, C480, C515, and C519. Position 519 (C519) interacts with siroheme.

The protein belongs to the nitrite and sulfite reductase 4Fe-4S domain family. In terms of assembly, monomer. Siroheme is required as a cofactor. The cofactor is [4Fe-4S] cluster.

The protein resides in the plastid. It is found in the chloroplast. It carries out the reaction 6 oxidized [2Fe-2S]-[ferredoxin] + NH4(+) + 2 H2O = nitrite + 6 reduced [2Fe-2S]-[ferredoxin] + 8 H(+). It participates in nitrogen metabolism; nitrate reduction (assimilation). In terms of biological role, catalyzes the six-electron reduction of nitrite to ammonium. This Oryza sativa subsp. japonica (Rice) protein is Ferredoxin--nitrite reductase, chloroplastic.